Here is a 109-residue protein sequence, read N- to C-terminus: Nucleoid-associated protein Sama_1311 (109 aa).

This sequence belongs to the YbaB/EbfC family. As to quaternary structure, homodimer.

It is found in the cytoplasm. It localises to the nucleoid. In terms of biological role, binds to DNA and alters its conformation. May be involved in regulation of gene expression, nucleoid organization and DNA protection. This is Nucleoid-associated protein Sama_1311 from Shewanella amazonensis (strain ATCC BAA-1098 / SB2B).